Here is a 695-residue protein sequence, read N- to C-terminus: Segment polarity protein dishevelled homolog DVL-1 (695 aa).

The DIX domain occupies 1 to 85; it reads MAETKIIYHM…RVVSWLVLAE (85 aa). A disordered region spans residues 89–237; that stretch reads SDAGSQGTDS…LRQADRASSF (149 aa). A compositionally biased stretch (basic residues) spans 142 to 151; it reads SHRRERARRR. A compositionally biased stretch (basic and acidic residues) spans 152-171; the sequence is NREEAARTNGHPRGDRRRDV. The span at 176–192 shows a compositional bias: low complexity; that stretch reads DSASTALSSELESSSFV. At serine 194 the chain carries Phosphoserine. The segment covering 200–214 has biased composition (low complexity); it reads TSRLSSSTEQSTSSR. Basic residues predominate over residues 215-228; the sequence is LIRKHKRRRRKQRL. Residues 251 to 323 form the PDZ domain; that stretch reads TVTLNMERHH…NDDAVRVLRE (73 aa). A DEP domain is found at 425–499; that stretch reads PDSGLEIRDR…SEQCYYVFGD (75 aa). The disordered stretch occupies residues 543-667; it reads PGPPPCFPPA…PGGPPVRELA (125 aa). Residues 551–580 are compositionally biased toward low complexity; that stretch reads PAYQDPGFSYGSGSTGSQQSEGSKSSGSTR. Residues 625–636 show a composition bias toward polar residues; sequence SRGSSPRSQASA.

The protein belongs to the DSH family. As to quaternary structure, interacts with CXXC4. Interacts (via PDZ domain) with NXN. Interacts with BRD7 and INVS. Interacts (via PDZ domain) with VANGL1 and VANGL2 (via C-terminus). Interacts with ARRB1; the interaction is enhanced by phosphorylation of DVL1. Interacts with CYLD. Interacts (via PDZ domain) with RYK. Self-associates (via DIX domain) and forms higher homooligomers. Interacts (via PDZ domain) with DACT1 and FZD7, where DACT1 and FZD7 compete for the same binding site. Interacts (via DEP domain) with MUSK; the interaction is direct and mediates the formation a DVL1, MUSK and PAK1 ternary complex involved in AChR clustering. Interacts (via PDZ domain) with TMEM88. Interacts with DCDC2. Interacts with FOXK2. Interacts with PKD1 (via extracellular domain). Interacts (via PDZ domain) with CCDC88C/DAPLE; competes with CCDC88C for binding to frizzled receptor FZD7 and dissociates from CCDC88C following initiation of non-canonical Wnt signaling when CCDC88C displaces DVL1 from ligand-activated FZD7. Ubiquitinated; undergoes both 'Lys-48'-linked ubiquitination, leading to its subsequent degradation by the ubiquitin-proteasome pathway, and 'Lys-63'-linked ubiquitination. The interaction with INVS is required for ubiquitination. Deubiquitinated by CYLD, which acts on 'Lys-63'-linked ubiquitin chains.

The protein resides in the cell membrane. It is found in the cytoplasm. It localises to the cytosol. Its subcellular location is the cytoplasmic vesicle. In terms of biological role, participates in Wnt signaling by binding to the cytoplasmic C-terminus of frizzled family members and transducing the Wnt signal to down-stream effectors. Plays a role both in canonical and non-canonical Wnt signaling. Plays a role in the signal transduction pathways mediated by multiple Wnt genes. Required for LEF1 activation upon WNT1 and WNT3A signaling. DVL1 and PAK1 form a ternary complex with MUSK which is important for MUSK-dependent regulation of AChR clustering during the formation of the neuromuscular junction (NMJ). The polypeptide is Segment polarity protein dishevelled homolog DVL-1 (DVL1) (Homo sapiens (Human)).